Consider the following 815-residue polypeptide: Sodium/hydrogen exchanger 1 (815 aa).

The Extracellular portion of the chain corresponds to 1–98; the sequence is MVLRSGICGL…FPVLGIDYTH (98 aa). O-linked (GalNAc...) threonine glycosylation is present at T42. Positions 42-79 are disordered; it reads TASTIRSSEPPRERSIGDVTTAPPEVTPESRPVNHSVT. Residue S56 is glycosylated (O-linked (GalNAc...) serine). O-linked (GalNAc...) threonine glycosylation is found at T61, T62, and T68. N75 carries N-linked (GlcNAc...) asparagine glycosylation. Residues 99–121 traverse the membrane as a helical segment; sequence VRTPFEISLWILLACLMKIGFHV. The Cytoplasmic segment spans residues 122 to 130; it reads IPTISSIVP. A helical membrane pass occupies residues 131-148; it reads ESCLLIVVGLLVGGLIKG. Residues 149–158 are Extracellular-facing; sequence VGETPPFLQS. The helical transmembrane segment at 159 to 176 threads the bilayer; the sequence is DVFFLFLLPPIILDAGYF. At 177 to 186 the chain is on the cytoplasmic side; sequence LPLRQFTENL. Residues 187-215 traverse the membrane as a helical segment; sequence GTILIFAVVGTLWNAFFLGGLMYAVCLVG. The Extracellular portion of the chain corresponds to 216 to 222; sequence GEQINNI. Residues 223–249 traverse the membrane as a helical segment; the sequence is GLLDNLLFGSIISAVDPVAVLAVFEEI. Over 250–252 the chain is Cytoplasmic; it reads HIN. A helical membrane pass occupies residues 253 to 283; the sequence is ELLHILVFGESLLNDAVTVVLYHLFEEFANY. Over 284–287 the chain is Extracellular; the sequence is EHVG. Residues 288 to 322 traverse the membrane as a helical segment; sequence IVDIFLGFLSFFVVALGGVLVGVVYGVIAAFTSRF. Residues 323–328 are Cytoplasmic-facing; the sequence is TSHIRV. Residues 329–341 traverse the membrane as a helical segment; sequence IEPLFVFLYSYMA. Over 342-350 the chain is Extracellular; sequence YLSAELFHL. A helical transmembrane segment spans residues 351–371; the sequence is SGIMALIASGVVMRPYVEANI. Over 372–373 the chain is Cytoplasmic; it reads SH. Residues 374–404 traverse the membrane as a helical segment; sequence KSHTTIKYFLKMWSSVSETLIFIFLGVSTVA. The Extracellular segment spans residues 405-410; that stretch reads GSHHWN. Residues 411 to 438 traverse the membrane as a helical segment; it reads WTFVISTLLFCLIARVLGVLGLTWFINK. At 439–444 the chain is on the cytoplasmic side; it reads FRIVKL. The helical transmembrane segment at 445–469 threads the bilayer; that stretch reads TPKDQFIIAYGGLRGAIAFSLGYLL. The Extracellular portion of the chain corresponds to 470–475; that stretch reads DKKHFP. Residues 476-505 traverse the membrane as a helical segment; it reads MCDLFLTAIITVIFFTVFVQGMTIRPLVDL. Residues 503–545 are interaction with TESC; that stretch reads VDLLAVKKKQETKRSINEEIHTQFLDHLLTGIEDICGHYGHHH. Residues 506–815 are Cytoplasmic-facing; that stretch reads LAVKKKQETK…EGEPFFPKGQ (310 aa). Positions 509-516 are PI(4,5)P2-binding region; that stretch reads KKKQETKR. Positions 515–545 are interaction with CHP2; the sequence is KRSINEEIHTQFLDHLLTGIEDICGHYGHHH. The tract at residues 540-545 is confers pH-dependent PI(4,5)P2 binding; the sequence is HYGHHH. The PI(4,5)P2-binding region stretch occupies residues 552 to 560; that stretch reads RFNKKYVKK. S599 and S602 each carry phosphoserine. T603 is subject to Phosphothreonine. Phosphoserine is present on residues S605 and S648. Positions 633–815 are interaction with TESC; it reads KILRNNLQKT…EGEPFFPKGQ (183 aa). The segment at 633-815 is interaction with CALM1; the sequence is KILRNNLQKT…EGEPFFPKGQ (183 aa). The tract at residues 684–687 is interaction with PPP3CA; that stretch reads LTVP. Residues S693, S697, and S703 each carry the phosphoserine modification. The interaction with PPP3CA stretch occupies residues 715–720; that stretch reads PVITID. Phosphoserine is present on residues S723, S726, and S729. The interval 744-815 is disordered; the sequence is LSRDPAKVAE…EGEPFFPKGQ (72 aa). Position 779 is a phosphothreonine (T779). Polar residues predominate over residues 782-791; sequence PSDSPSSQRI. 3 positions are modified to phosphoserine: S785, S787, and S796.

Belongs to the monovalent cation:proton antiporter 1 (CPA1) transporter (TC 2.A.36) family. As to quaternary structure, homodimer; dimerization is crucial for its function. Oligomer. Interacts with CALM1 in a calcium-dependent manner. Interacts with TESC. Interacts (via the C-terminal domain) with CHP1; the interaction occurs at the plasma membrane in a calcium-dependent manner and facilitates the maturation, cell surface expression, and function of SLC9A3. Interacts with CHP2; the interaction occurs in a calcium-dependent manner. Interacts with EZR; regulates the cytoskeletal interactions of SLC9A1 and promotes stress fiber formation. Post-translationally, O-glycosylated. Ubiquitinated, leading to its degradation by the proteasome. Ubiquitination is reduced by CHP1. In terms of processing, phosphorylation at Thr-779 increases SLC9A1 activity. Specifically dephosphorylated at Thr-779 by PPP3CA that negatively regulates SLC9A1 activity. Phosphorylation at Ser-648 by AKT1 reduces SLC9A1 binding to CALM1. Post-translationally, palmitoylated; may play a major role in SLC9A1 regulation. Kidney and intestine.

The protein localises to the cell membrane. It localises to the basolateral cell membrane. It carries out the reaction Na(+)(in) + H(+)(out) = Na(+)(out) + H(+)(in). It catalyses the reaction Li(+)(out) + H(+)(in) = Li(+)(in) + H(+)(out). The catalysed reaction is Li(+)(in) + Na(+)(out) = Li(+)(out) + Na(+)(in). Activated at acidic pHs. Inhibited by amiloride and 5-amino-substituted derivatives. Inhibited by cariporide and eniporide. Phosphatidylinositol 4,5-bisphosphate (PI(4,5)P2) and phosphatidylinositol 3,4,5-trisphosphate (PI(3,4,5)P3) bind and differentially regulate SLC9A1 activity. Electroneutral Na(+) /H(+) antiporter that extrudes Na(+) in exchange for external protons driven by the inward sodium ion chemical gradient, protecting cells from acidification that occurs from metabolism. Exchanges intracellular H(+) ions for extracellular Na(+) in 1:1 stoichiometry. Plays a key role in maintening intracellular pH neutral and cell volume, and thus is important for cell growth, proliferation, migration and survival. In addition, can transport lithium Li(+) and also functions as a Na(+)/Li(+) antiporter. SLC9A1 also functions in membrane anchoring and organization of scaffolding complexes that coordinate signaling inputs. The chain is Sodium/hydrogen exchanger 1 from Homo sapiens (Human).